Here is a 320-residue protein sequence, read N- to C-terminus: 1-aminocyclopropane-1-carboxylate oxidase (320 aa).

Positions proline 154–proline 254 constitute a Fe2OG dioxygenase domain. Fe cation is bound by residues histidine 178, aspartate 180, and histidine 235.

It belongs to the iron/ascorbate-dependent oxidoreductase family. Requires Fe cation as cofactor.

It catalyses the reaction 1-aminocyclopropane-1-carboxylate + L-ascorbate + O2 = ethene + L-dehydroascorbate + hydrogen cyanide + CO2 + 2 H2O. It participates in alkene biosynthesis; ethylene biosynthesis via S-adenosyl-L-methionine; ethylene from S-adenosyl-L-methionine: step 2/2. In Persea americana (Avocado), this protein is 1-aminocyclopropane-1-carboxylate oxidase (ACO).